The primary structure comprises 190 residues: Adenylate kinase (190 aa).

Residue 11 to 16 (GAGKGT) participates in ATP binding. The segment at 31 to 60 (STGDIFRFNLKNDTELGKQARVFMDNGELV) is NMP. Residues threonine 32, arginine 37, 58–60 (ELV), 86–89 (GYPR), and glutamine 93 contribute to the AMP site. An LID region spans residues 127 to 137 (ERGKTSGRADD). Arginine 128 is a binding site for ATP. AMP contacts are provided by arginine 134 and arginine 146. Glycine 174 serves as a coordination point for ATP.

This sequence belongs to the adenylate kinase family. Monomer.

Its subcellular location is the cytoplasm. The catalysed reaction is AMP + ATP = 2 ADP. The protein operates within purine metabolism; AMP biosynthesis via salvage pathway; AMP from ADP: step 1/1. Catalyzes the reversible transfer of the terminal phosphate group between ATP and AMP. Plays an important role in cellular energy homeostasis and in adenine nucleotide metabolism. The protein is Adenylate kinase of Flavobacterium johnsoniae (strain ATCC 17061 / DSM 2064 / JCM 8514 / BCRC 14874 / CCUG 350202 / NBRC 14942 / NCIMB 11054 / UW101) (Cytophaga johnsonae).